The chain runs to 725 residues: ABC transporter G family member 19 (725 aa).

In terms of domain architecture, ABC transporter spans 73–325 (LNFNNLQYDV…FSDFGRPIPE (253 aa)). Residue 117 to 124 (GASGAGKS) participates in ATP binding. One can recognise an ABC transmembrane type-2 domain in the interval 419–629 (FETFILAKRY…PYEAVLINEF (211 aa)). 7 helical membrane passes run 438-458 (LVGT…TVYW), 473-493 (LFAF…PVFI), 515-535 (ISHS…FSAI), 537-557 (FWTV…LLIY), 577-597 (IMLC…LSGF), 606-626 (FYWT…AVLI), and 698-718 (LWIT…ALLF).

This sequence belongs to the ABC transporter superfamily. ABCG family. Eye pigment precursor importer (TC 3.A.1.204) subfamily.

The protein resides in the vacuole membrane. Functionally, confers selective resistance to kanamycin. In Arabidopsis thaliana (Mouse-ear cress), this protein is ABC transporter G family member 19 (ABCG19).